A 240-amino-acid chain; its full sequence is Eukaryotic translation initiation factor 4E-2 (240 aa).

The disordered stretch occupies residues 1–29; it reads MVVMDSPVSGRMADQNIDPNTTTSPSPIE. Residues 17–26 show a composition bias toward polar residues; that stretch reads IDPNTTTSPS. EIF4G-binding stretches follow at residues 65-68 and 75-111; these read HCFQ and FDNPSSKSNQVIWGSSLRSLYTFATIEEFWSLYNNIH. MRNA contacts are provided by residues 83–88, lysine 115, and 133–134; these read NQVIWG and WE. Residues cysteine 138 and cysteine 176 are joined by a disulfide bond. Positions 159–168 are EIF4G-binding; sequence NTLLALVGEQ. MRNA contacts are provided by residues 183–188 and 228–232; these read RTRGDR and KTLDR.

This sequence belongs to the eukaryotic initiation factor 4E family. EIF4F is a multi-subunit complex, the composition of which varies with external and internal environmental conditions. It is composed of at least EIF4A, EIF4E and EIF4G. EIF4E is also known to interact with other partners. In higher plants two isoforms of EIF4F have been identified, named isoform EIF4F and isoform EIF(iso)4F. Isoform EIF4F has subunits p220 and p26, whereas isoform EIF(iso)4F has subunits p82 and p28. According to the redox status, the Cys-138-Cys-176 disulfide bridge may have a role in regulating protein function by affecting its ability to bind capped mRNA.

It localises to the nucleus. Its subcellular location is the cytoplasm. In terms of biological role, component of the protein complex eIF4F, which is involved in the recognition of the mRNA cap, ATP-dependent unwinding of 5'-terminal secondary structure and recruitment of mRNA to the ribosome. Recognizes and binds the 7-methylguanosine-containing mRNA cap during an early step in the initiation of protein synthesis and facilitates ribosome binding by inducing the unwinding of the mRNAs secondary structures. This chain is Eukaryotic translation initiation factor 4E-2, found in Arabidopsis thaliana (Mouse-ear cress).